A 104-amino-acid chain; its full sequence is Large ribosomal subunit protein bL21 (104 aa).

It belongs to the bacterial ribosomal protein bL21 family. As to quaternary structure, part of the 50S ribosomal subunit. Contacts protein L20.

This protein binds to 23S rRNA in the presence of protein L20. In Streptococcus equi subsp. equi (strain 4047), this protein is Large ribosomal subunit protein bL21.